We begin with the raw amino-acid sequence, 353 residues long: Polyprenal reductase 2 (353 aa).

6 helical membrane-spanning segments follow: residues 11-31, 78-98, 175-195, 234-254, 291-308, and 313-335; these read PLLC…ALPI, FMHF…AIWF, MHIV…LSLA, PLLK…WGSL, YLAE…SGAE, and WFLF…NWYL.

It belongs to the steroid 5-alpha reductase family. Polyprenal reductase subfamily.

It is found in the cell membrane. The enzyme catalyses a di-trans,poly-cis-dolichal + NADP(+) = a di-trans,poly-cis-polyprenal + NADPH + H(+). It functions in the pathway protein modification; protein glycosylation. Functionally, plays a key role in early steps of protein N-linked glycosylation by being involved in the conversion of polyprenol into dolichol. Acts as a polyprenal reductase that mediates the reduction of polyprenal into dolichal in a NADP-dependent mechanism. Dolichols are required for the synthesis of dolichol-linked monosaccharides and the oligosaccharide precursor used for N-glycosylation. This is Polyprenal reductase 2 from Oryza sativa subsp. japonica (Rice).